Consider the following 638-residue polypeptide: Epithelial sodium channel subunit beta (638 aa).

The Cytoplasmic portion of the chain corresponds to 1 to 50 (MPVKKYLLKCLHRLQKGPGYTYKELLVWYCNNTNTHGPKRIICEGPKKKA). A helical transmembrane segment spans residues 51 to 71 (MWFLLTLLFACLVCWQWGVFI). Topologically, residues 72–530 (QTYLSWEVSV…GGQFGFWMGG (459 aa)) are extracellular. Intrachain disulfides connect Cys-98–Cys-270, Cys-182–Cys-187, Cys-194–Cys-201, Cys-247–Cys-254, Cys-359–Cys-446, Cys-384–Cys-442, Cys-388–Cys-438, Cys-397–Cys-424, and Cys-399–Cys-413. N-linked (GlcNAc...) asparagine glycosylation is found at Asn-135 and Asn-141. Asn-205 carries N-linked (GlcNAc...) asparagine glycosylation. Residues 531 to 551 (SVLCLIEFGEIIIDFIWITII) traverse the membrane as a helical segment. At 552-638 (KLVASCKGLR…MESDSEVEAI (87 aa)) the chain is on the cytoplasmic side. The segment at 594–620 (SCRPHGEVYPDQQTLPIPGTPPPNYDS) is disordered. The short motif at 614-618 (PPPNY) is the PY motif; recruits WW domain-containing proteins and is thereby required for ubiquitination and inhibition of the channel by NEDD4 and NEDD4L element. Phosphoserine is present on residues Ser-631 and Ser-633.

It belongs to the amiloride-sensitive sodium channel (TC 1.A.6) family. SCNN1B subfamily. As to quaternary structure, component of the heterotrimeric epithelial sodium channel (ENaC) composed of an alpha/SCNN1A, a beta/SCNN1B and a gamma/SCNN1G subunit. Interacts with WWP1 (via WW domains). Interacts with WWP2 (via WW domains); inhibits the channel. Interacts with the full-length immature form of PCSK9 (pro-PCSK9). Interacts (N-glycosylated) with BPIFA1; the interaction is direct and inhibits the proteolytic processing of SCNN1A and SCNN1G and the activation of ENaC. Post-translationally, ubiquitinated. Can be ubiquitinated at multiple sites and undergo monoubiquitination and polyubiquitination. Ubiquitination by NEDD4 or NEDD4L inhibits the ENaC channel through endocytosis, intracellular retention and degradation of its individual subunits. However, some studies could not confirm the ubiquitination of this subunit of the ENaC. N-glycosylated. N-glycosylation is required for interaction with BPIFA1. In terms of processing, phosphorylated on serine and threonine residues. Aldosterone and insulin increase the basal level of phosphorylation. As to expression, lung and kidney.

Its subcellular location is the apical cell membrane. It is found in the cytoplasmic vesicle membrane. It carries out the reaction Na(+)(in) = Na(+)(out). With respect to regulation, originally identified and characterized by its inhibition by the diuretic drug amiloride. This is one of the three pore-forming subunits of the heterotrimeric epithelial sodium channel (ENaC), a critical regulator of sodium balance and fluid homeostasis. ENaC operates in epithelial tissues, where it mediates the electrodiffusion of sodium ions from extracellular fluid through the apical membrane of cells, with water following osmotically. It plays a key role in maintaining sodium homeostasis through electrogenic sodium reabsorption in the kidneys. This subunit is not essential for ENaC function in airway surface liquid homeostasis and proper mucus clearance. This chain is Epithelial sodium channel subunit beta, found in Mus musculus (Mouse).